The sequence spans 320 residues: Malate dehydrogenase (320 aa).

Residues 10 to 15 (GAGMIG) and aspartate 34 contribute to the NAD(+) site. Residues arginine 83 and arginine 89 each coordinate substrate. NAD(+) is bound by residues asparagine 96 and 119 to 121 (ITN). Substrate is bound by residues asparagine 121 and arginine 152. Residue histidine 176 is the Proton acceptor of the active site.

The protein belongs to the LDH/MDH superfamily. MDH type 3 family.

It carries out the reaction (S)-malate + NAD(+) = oxaloacetate + NADH + H(+). Catalyzes the reversible oxidation of malate to oxaloacetate. The chain is Malate dehydrogenase from Caulobacter sp. (strain K31).